The primary structure comprises 269 residues: Intermembrane phospholipid transport system ATP-binding protein MlaF (269 aa).

The 237-residue stretch at 9-245 folds into the ABC transporter domain; the sequence is VDMRDVSFTR…PDPRVRQFLD (237 aa). 41 to 48 serves as a coordination point for ATP; it reads GPSGIGKT.

Belongs to the ABC transporter superfamily. MlaF family. As to quaternary structure, the complex is composed of two ATP-binding proteins (MlaF), two transmembrane proteins (MlaE), two cytoplasmic solute-binding proteins (MlaB) and six periplasmic solute-binding proteins (MlaD).

The protein localises to the cell inner membrane. Functionally, part of the ABC transporter complex MlaFEDB, which is involved in a phospholipid transport pathway that maintains lipid asymmetry in the outer membrane by retrograde trafficking of phospholipids from the outer membrane to the inner membrane. Responsible for energy coupling to the transport system. The sequence is that of Intermembrane phospholipid transport system ATP-binding protein MlaF from Escherichia coli O157:H7.